A 163-amino-acid chain; its full sequence is Interleukin-17F (163 aa).

A signal peptide spans 1–30 (MTVKTLHGPAMVKYLLLSILGLAFLSEAAA). N83 carries N-linked (GlcNAc...) asparagine glycosylation. Intrachain disulfides connect C102–C152 and C107–C154.

It belongs to the IL-17 family. Homodimer; disulfide-linked. Heterodimer with IL17A (IL17A-IL17F). Forms complexes with IL17RA and IL17RC receptors with 2:1 binding stoichiometry: two receptor chains for one interleukin molecule. IL17F homodimer forms predominantly complexes with IL17RC homodimer, whereas IL17A-IL17F favors complexes with IL17RA-IL17RC. IL17RA and IL17RC chains cannot distinguish between IL17A and IL17F molecules, potentially enabling the formation of topologically distinct complexes. Expressed in T-helper 1 and T-helper 2 cells, basophils and mast cells.

The protein resides in the secreted. Its function is as follows. Effector cytokine of innate and adaptive immune system involved in antimicrobial host defense and maintenance of tissue integrity. IL17A-IL17F signals via IL17RA-IL17RC heterodimeric receptor complex, triggering homotypic interaction of IL17RA and IL17RC chains with TRAF3IP2 adapter through SEFIR domains. This leads to downstream TRAF6-mediated activation of NF-kappa-B and MAPkinase pathways ultimately resulting in transcriptional activation of cytokines, chemokines, antimicrobial peptides and matrix metalloproteinases, with potential strong immune inflammation. IL17A-IL17F is primarily involved in host defense against extracellular bacteria and fungi by inducing neutrophilic inflammation. As signature effector cytokine of T-helper 17 cells (Th17), primarily induces neutrophil activation and recruitment at infection and inflammatory sites. Stimulates the production of antimicrobial beta-defensins DEFB1, DEFB103A, and DEFB104A by mucosal epithelial cells, limiting the entry of microbes through the epithelial barriers. IL17F homodimer can signal via IL17RC homodimeric receptor complex, triggering downstream activation of TRAF6 and NF-kappa-B signaling pathway. Via IL17RC induces transcriptional activation of IL33, a potent cytokine that stimulates group 2 innate lymphoid cells and adaptive T-helper 2 cells involved in pulmonary allergic response to fungi. Likely via IL17RC, promotes sympathetic innervation of peripheral organs by coordinating the communication between gamma-delta T cells and parenchymal cells. Stimulates sympathetic innervation of thermogenic adipose tissue by driving TGFB1 expression. Regulates the composition of intestinal microbiota and immune tolerance by inducing antimicrobial proteins that specifically control the growth of commensal Firmicutes and Bacteroidetes. This chain is Interleukin-17F (IL17F), found in Homo sapiens (Human).